The chain runs to 135 residues: Galectin-1 (135 aa).

Position 2 is an N-acetylalanine (alanine 2). The Galectin domain occupies 4 to 135; that stretch reads GLVASNLNLK…DFKIKCVAFE (132 aa). Lysine 13, lysine 19, and lysine 29 each carry N6-acetyllysine. Serine 30 is modified (phosphoserine). A beta-D-galactoside contacts are provided by residues 45–49, histidine 53, asparagine 62, and 69–72; these read HFNPR and WGTE. Lysine 108 carries the N6-acetyllysine; alternate modification. At lysine 108 the chain carries N6-succinyllysine; alternate. An N6-acetyllysine modification is found at lysine 128.

As to quaternary structure, homodimer. Binds LGALS3BP. Interacts with CD2, CD3, CD4, CD6, CD7, CD43, ALCAM and CD45. Interacts with laminin (via poly-N-acetyllactosamine). Interacts with SUSD2. Interacts with cargo receptor TMED10; the interaction mediates the translocation from the cytoplasm into the ERGIC (endoplasmic reticulum-Golgi intermediate compartment) and thereby secretion. Interacts with CD69.

Its subcellular location is the secreted. It is found in the extracellular space. The protein localises to the extracellular matrix. It localises to the cytoplasm. Functionally, lectin that binds beta-galactoside and a wide array of complex carbohydrates. Plays a role in regulating apoptosis, cell proliferation and cell differentiation. Inhibits CD45 protein phosphatase activity and therefore the dephosphorylation of Lyn kinase. Strong inducer of T-cell apoptosis. Plays a negative role in Th17 cell differentiation via activation of the receptor CD69. The polypeptide is Galectin-1 (Lgals1) (Mus musculus (Mouse)).